The chain runs to 642 residues: Triacylglycerol lipase 3 (642 aa).

Residues 204 to 392 (LILQGGSLFG…NEIEPFLNIN (189 aa)) form the PNPLA domain. The GXSXG signature appears at 235-239 (GSSMG). Serine 237 functions as the Nucleophile in the catalytic mechanism. The HXXXXD acyltransferase motif motif lies at 298–303 (HGYSQD). Catalysis depends on glutamate 403, which acts as the Proton acceptor. Over residues 471 to 481 (RKTQRSSSQSP) the composition is skewed to polar residues. Residues 471–502 (RKTQRSSSQSPIKAGTVEDLEPEPLMSPVPPS) are disordered.

It localises to the lipid droplet. The catalysed reaction is a triacylglycerol + H2O = a diacylglycerol + a fatty acid + H(+). The enzyme catalyses 1,2,3-tri-(9Z-octadecenoyl)-glycerol + H2O = di-(9Z)-octadecenoylglycerol + (9Z)-octadecenoate + H(+). It catalyses the reaction di-(9Z)-octadecenoylglycerol + H2O = (9Z-octadecenoyl)-glycerol + (9Z)-octadecenoate + H(+). It carries out the reaction a 1-acyl-sn-glycero-3-phosphoethanolamine + (9Z)-octadecenoyl-CoA = 1-acyl-2-(9Z)-octadecenoyl-sn-glycero-3-phosphoethanolamine + CoA. The catalysed reaction is a 1-acyl-sn-glycero-3-phosphoethanolamine + hexadecanoyl-CoA = 1-acyl-2-hexadecanoyl-sn-glycero-3-phosphoethanolamine + CoA. With respect to regulation, loses its lipolytic activity in cells lacking nonpolar lipids. Functionally, lipid particle-localized triacylglycerol (TAG) lipase. The lipid droplet/particle is a lipid storage compartment which serves as a depot of energy and building blocks for membrane lipid biosynthesis. Involved in the mobilization of the non-polar storage lipids triacylglycerols (TAGs) from lipid particles by hydrolysis of TAGs, releasing and supplying specific fatty acids to the appropriate metabolic pathways. Also catalyzes the acylation of lysophosphatidic acid (LPA). Important for efficient sporulation, but rather through its acyltransferase than lipase activity. The chain is Triacylglycerol lipase 3 (TGL3) from Saccharomyces cerevisiae (strain ATCC 204508 / S288c) (Baker's yeast).